The following is a 333-amino-acid chain: Ketol-acid reductoisomerase (NADP(+)) (333 aa).

Positions Met1–Thr171 constitute a KARI N-terminal Rossmann domain. NADP(+) contacts are provided by residues Tyr14 to Gln17, Arg37, Thr42, and Asp72 to Gln75. The active site involves His97. Residue Gly123 participates in NADP(+) binding. The region spanning Thr172–Leu317 is the KARI C-terminal knotted domain. 4 residues coordinate Mg(2+): Asp180, Glu184, Glu216, and Glu220. Ser241 serves as a coordination point for substrate.

Belongs to the ketol-acid reductoisomerase family. Requires Mg(2+) as cofactor.

The catalysed reaction is (2R)-2,3-dihydroxy-3-methylbutanoate + NADP(+) = (2S)-2-acetolactate + NADPH + H(+). The enzyme catalyses (2R,3R)-2,3-dihydroxy-3-methylpentanoate + NADP(+) = (S)-2-ethyl-2-hydroxy-3-oxobutanoate + NADPH + H(+). The protein operates within amino-acid biosynthesis; L-isoleucine biosynthesis; L-isoleucine from 2-oxobutanoate: step 2/4. It participates in amino-acid biosynthesis; L-valine biosynthesis; L-valine from pyruvate: step 2/4. Involved in the biosynthesis of branched-chain amino acids (BCAA). Catalyzes an alkyl-migration followed by a ketol-acid reduction of (S)-2-acetolactate (S2AL) to yield (R)-2,3-dihydroxy-isovalerate. In the isomerase reaction, S2AL is rearranged via a Mg-dependent methyl migration to produce 3-hydroxy-3-methyl-2-ketobutyrate (HMKB). In the reductase reaction, this 2-ketoacid undergoes a metal-dependent reduction by NADPH to yield (R)-2,3-dihydroxy-isovalerate. The protein is Ketol-acid reductoisomerase (NADP(+)) of Xanthomonas campestris pv. campestris (strain 8004).